Reading from the N-terminus, the 784-residue chain is Spindle pole body component alp4 (784 aa).

It belongs to the TUBGCP family. Part of the gamma-tubulin complex. Interacts with mcp6. Interacts with mto1. Interacts with mto2.

Its subcellular location is the cytoplasm. It localises to the cytoskeleton. The protein resides in the microtubule organizing center. The protein localises to the spindle pole body. Functionally, component of the gamma tubule complex that is required for the regulation of both interphase microtubules and mitotic bipolar spindles. The protein is Spindle pole body component alp4 (alp4) of Schizosaccharomyces pombe (strain 972 / ATCC 24843) (Fission yeast).